Here is a 582-residue protein sequence, read N- to C-terminus: ATP-dependent lipid A-core flippase (582 aa).

A run of 5 helical transmembrane segments spans residues 16–36 (LWPTIAPFKAGLIVAGVALIL), 63–83 (VLVWMPLVVIGLMILRGITSY), 153–173 (IIGLFIMMFYYSWQLSIILIV), 253–273 (PIIQLIASLALAFVLYAASFP), and 275–295 (VMDNLTAGTITVVFSSMIALM). The region spanning 28–310 (IVAGVALILN…LTNVNAQFQR (283 aa)) is the ABC transmembrane type-1 domain. Positions 342 to 578 (VEFRNVTFTY…RGVYAQLHKM (237 aa)) constitute an ABC transporter domain. 376–383 (GRSGSGKS) contacts ATP.

Belongs to the ABC transporter superfamily. Lipid exporter (TC 3.A.1.106) family. As to quaternary structure, homodimer.

The protein resides in the cell inner membrane. The enzyme catalyses ATP + H2O + lipid A-core oligosaccharideSide 1 = ADP + phosphate + lipid A-core oligosaccharideSide 2.. Its function is as follows. Involved in lipopolysaccharide (LPS) biosynthesis. Translocates lipid A-core from the inner to the outer leaflet of the inner membrane. Transmembrane domains (TMD) form a pore in the inner membrane and the ATP-binding domain (NBD) is responsible for energy generation. In Shigella flexneri, this protein is ATP-dependent lipid A-core flippase.